We begin with the raw amino-acid sequence, 273 residues long: Shikimate dehydrogenase (NADP(+)) (273 aa).

Shikimate contacts are provided by residues 14–16 (SKS) and threonine 61. The active-site Proton acceptor is the lysine 65. Aspartate 77 contacts NADP(+). 2 residues coordinate shikimate: asparagine 86 and aspartate 102. NADP(+) is bound by residues 126 to 130 (GAGGA), 150 to 155 (NRTYEK), and methionine 213. Tyrosine 215 is a shikimate binding site. An NADP(+)-binding site is contributed by glycine 237.

It belongs to the shikimate dehydrogenase family. Homodimer.

It catalyses the reaction shikimate + NADP(+) = 3-dehydroshikimate + NADPH + H(+). It functions in the pathway metabolic intermediate biosynthesis; chorismate biosynthesis; chorismate from D-erythrose 4-phosphate and phosphoenolpyruvate: step 4/7. Involved in the biosynthesis of the chorismate, which leads to the biosynthesis of aromatic amino acids. Catalyzes the reversible NADPH linked reduction of 3-dehydroshikimate (DHSA) to yield shikimate (SA). In Aliivibrio salmonicida (strain LFI1238) (Vibrio salmonicida (strain LFI1238)), this protein is Shikimate dehydrogenase (NADP(+)).